We begin with the raw amino-acid sequence, 331 residues long: Glucokinase (331 aa).

Glycine 16–threonine 21 is a binding site for ATP.

This sequence belongs to the bacterial glucokinase family.

Its subcellular location is the cytoplasm. The enzyme catalyses D-glucose + ATP = D-glucose 6-phosphate + ADP + H(+). This Pseudomonas aeruginosa (strain LESB58) protein is Glucokinase.